The chain runs to 153 residues: uncharacterized protein (153 aa).

Transmembrane regions (helical) follow at residues 16–36 (ILAC…ILEI) and 97–117 (ALTT…CIIC).

The protein localises to the membrane. This is an uncharacterized protein from Human herpesvirus 6A (strain Uganda-1102) (HHV-6 variant A).